The following is a 445-amino-acid chain: Beclin-1 (445 aa).

Positions 103 to 122 match the BH3 motif; sequence TMENLSRRLKVTGDLFDIMS. A coiled-coil region spans residues 137-264; it reads DTLLDQLDTQ…QLDKLKKTNV (128 aa). The interval 240-445 is evolutionary conserved domain (ECD); it reads DDLKSVENQM…AWVSSQFYNK (206 aa). Positions 420 to 445 are required for membrane-association; sequence WTKALKFMLTNLKWGLAWVSSQFYNK.

It belongs to the beclin family. As to quaternary structure, component of the PI3K (PI3KC3/PI3K-III/class III phosphatidylinositol 3-kinase) complex. In terms of processing, may be proteolytically processed by caspases; the C-terminal fragment(s) may induce apoptosis.

The protein resides in the cytoplasm. The protein localises to the golgi apparatus. It localises to the trans-Golgi network membrane. It is found in the endosome membrane. Its subcellular location is the endoplasmic reticulum membrane. The protein resides in the mitochondrion membrane. The protein localises to the cytoplasmic vesicle. It localises to the autophagosome. Its function is as follows. Plays a central role in autophagy. Acts as core subunit of different PI3K complex forms that mediate formation of phosphatidylinositol 3-phosphate and are believed to play a role in multiple membrane trafficking pathways: PI3KC3-C1 is involved in initiation of autophagosomes and PI3KC3-C2 in maturation of autophagosomes and endocytosis. Involved in regulation of degradative endocytic trafficking and required for the abscission step in cytokinesis, probably in the context of PI3KC3-C2. Essential for the formation of PI3KC3-C2 but not PI3KC3-C1 PI3K complex forms. Involved in endocytosis including endosome formation in neuronal cells. The polypeptide is Beclin-1 (becn1) (Xenopus tropicalis (Western clawed frog)).